Here is a 300-residue protein sequence, read N- to C-terminus: MEPPMEQSGGEQEPGAVRLLDLPWEDVLLPHVLNWVPLRQLLRLQRVSRAFRALVQLHLARLRRFDAAQVGPQIPRAALVRLLRDAEGLQELALAPCHEWLLDEDLVPVLARNPQLRSVALAGCGQLSRRALGALAEGCPRLQRISLAHCDWVDGLALRGLADRCPALEELDLTACRQLKDEAIVYLAQRRGAGLRSLSLAVNANVGDTAVQELARNCPQLEHLDLTGCLRVGSDGVRTLAEYCPALRSLRVRHCHHVAEPSLSRLRKRGVDIDVEPPLHQALVLLQDMAGFAPFVNLQV.

Position 1 is an N-acetylmethionine (Met1). Residues 19–66 (LLDLPWEDVLLPHVLNWVPLRQLLRLQRVSRAFRALVQLHLARLRRFD) enclose the F-box domain. Positions 113–269 (NPQLRSVALA…EPSLSRLRKR (157 aa)) are interaction with SMURF1. 5 LRR repeats span residues 141-162 (RLQRISLAHCDWVDGLALRGLA), 167-188 (ALEELDLTACRQLKDEAIVYLA), 194-215 (GLRSLSLAVNANVGDTAVQELA), 220-241 (QLEHLDLTGCLRVGSDGVRTLA), and 246-267 (ALRSLRVRHCHHVAEPSLSRLR).

Belongs to the FBXL15 family. In terms of assembly, part of the SCF (SKP1-CUL1-F-box) E3 ubiquitin-protein ligase complex SCF(FBXL15) composed of CUL1, SKP1, RBX1 and FBXL15.

Its subcellular location is the cytoplasm. It participates in protein modification; protein ubiquitination. Functionally, substrate recognition component of a SCF (SKP1-CUL1-F-box protein) E3 ubiquitin-protein ligase complex which mediates the ubiquitination and subsequent proteasomal degradation of SMURF1, thereby acting as a positive regulator of the BMP signaling pathway. Required for dorsal/ventral pattern formation. Also mediates ubiquitination of SMURF2 and WWP2. Required for bone mass maintenance. This is F-box/LRR-repeat protein 15 (Fbxl15) from Rattus norvegicus (Rat).